The chain runs to 1133 residues: Trafficking protein particle complex subunit 11 (1133 aa).

At lysine 245 the chain carries N6-acetyllysine.

This sequence belongs to the TRAPPC11 family. Component of the multisubunit TRAPP (transport protein particle) complex, which includes at least TRAPPC2, TRAPPC2L, TRAPPC3, TRAPPC3L, TRAPPC4, TRAPPC5, TRAPPC8, TRAPPC9, TRAPPC10, TRAPPC11 and TRAPPC12.

The protein localises to the golgi apparatus. It localises to the cis-Golgi network. Its function is as follows. Involved in endoplasmic reticulum to Golgi apparatus trafficking at a very early stage. This Bos taurus (Bovine) protein is Trafficking protein particle complex subunit 11 (TRAPPC11).